Here is a 661-residue protein sequence, read N- to C-terminus: uncharacterized protein (661 aa).

The first 24 residues, 1–24, serve as a signal peptide directing secretion; the sequence is MKTLKTLKIFIIVFIASVSLASFA. 6 helical membrane-spanning segments follow: residues 226 to 246, 254 to 274, 410 to 430, 436 to 456, 469 to 489, and 562 to 582; these read IIGAALILYTMFFAFNMALNT, IALFVIKFLFVAYFSIGLGPL, IILAAGLVFSVIFLSILLYFI, CMITIYVMTYISPIFIPMALF, VCISCALQPAVVAGFIALLIT, and VVSILAELLCVLVFSVIFYYF. Residues 629–661 form a disordered region; the sequence is GKPLVGDKPGVGGKRKEGEQQGGDLASGSGGGK.

Belongs to the TrbL/VirB6 family.

It is found in the cell membrane. This is an uncharacterized protein from Rickettsia conorii (strain ATCC VR-613 / Malish 7).